The following is a 293-amino-acid chain: Acetyl-coenzyme A carboxylase carboxyl transferase subunit beta (293 aa).

The CoA carboxyltransferase N-terminal domain occupies 29–293 (LWVKCSECSQ…GVNELVEANI (265 aa)). Zn(2+)-binding residues include cysteine 33, cysteine 36, cysteine 52, and cysteine 55. The C4-type zinc finger occupies 33 to 55 (CSECSQVAYRKDLISNFNVCSNC).

Belongs to the AccD/PCCB family. In terms of assembly, acetyl-CoA carboxylase is a heterohexamer composed of biotin carboxyl carrier protein (AccB), biotin carboxylase (AccC) and two subunits each of ACCase subunit alpha (AccA) and ACCase subunit beta (AccD). It depends on Zn(2+) as a cofactor.

The protein localises to the cytoplasm. It catalyses the reaction N(6)-carboxybiotinyl-L-lysyl-[protein] + acetyl-CoA = N(6)-biotinyl-L-lysyl-[protein] + malonyl-CoA. It participates in lipid metabolism; malonyl-CoA biosynthesis; malonyl-CoA from acetyl-CoA: step 1/1. Component of the acetyl coenzyme A carboxylase (ACC) complex. Biotin carboxylase (BC) catalyzes the carboxylation of biotin on its carrier protein (BCCP) and then the CO(2) group is transferred by the transcarboxylase to acetyl-CoA to form malonyl-CoA. The polypeptide is Acetyl-coenzyme A carboxylase carboxyl transferase subunit beta (Prochlorococcus marinus (strain MIT 9215)).